The primary structure comprises 277 residues: Soluble NSF attachment protein 29 (277 aa).

Positions 1–11 (MSRNPFDDDYR) are enriched in basic and acidic residues. Disordered stretches follow at residues 1–30 (MSRN…MGHY), 49–73 (ESLD…STAQ), and 117–170 (KFTK…ESSR). Over residues 14 to 28 (AASSTMPVKSYTTMG) the composition is skewed to polar residues. The t-SNARE coiled-coil homology 1 domain maps to 44-106 (EKTLQESLDS…QMTQRNLNSL (63 aa)). A compositionally biased stretch (basic and acidic residues) spans 49–65 (ESLDSTERSRRHLENSE). Over residues 134 to 170 (SKSASRLSETATNLSSGGGSATFSGPSGQRTLTESSR) the composition is skewed to polar residues. One can recognise a t-SNARE coiled-coil homology 2 domain in the interval 179 to 241 (EAMDNQIDEN…RDQDKQMQKI (63 aa)).

This sequence belongs to the SNAP-25 family.

The protein localises to the synapse. It localises to the synaptosome. Functionally, SNAREs, soluble N-ethylmaleimide-sensitive factor-attachment protein receptors, are essential proteins for fusion of cellular membranes. SNAREs localized on opposing membranes assemble to form a trans-SNARE complex, an extended, parallel four alpha-helical bundle that drives membrane fusion. Plays a role in the processing and secretion of the aspartic protease hrg-7 from the intestine. This Caenorhabditis elegans protein is Soluble NSF attachment protein 29.